Consider the following 425-residue polypeptide: Glucose-1-phosphate adenylyltransferase (425 aa).

Residues tyrosine 114, glycine 179, 194–195, and serine 212 contribute to the alpha-D-glucose 1-phosphate site; that span reads EK.

Belongs to the bacterial/plant glucose-1-phosphate adenylyltransferase family. Homotetramer.

The catalysed reaction is alpha-D-glucose 1-phosphate + ATP + H(+) = ADP-alpha-D-glucose + diphosphate. It participates in glycan biosynthesis; glycogen biosynthesis. Its function is as follows. Involved in the biosynthesis of ADP-glucose, a building block required for the elongation reactions to produce glycogen. Catalyzes the reaction between ATP and alpha-D-glucose 1-phosphate (G1P) to produce pyrophosphate and ADP-Glc. The protein is Glucose-1-phosphate adenylyltransferase of Pectobacterium carotovorum subsp. carotovorum (strain PC1).